Consider the following 735-residue polypeptide: 1,4-alpha-glucan branching enzyme GlgB 1 (735 aa).

Asp418 acts as the Nucleophile in catalysis. Glu471 functions as the Proton donor in the catalytic mechanism.

This sequence belongs to the glycosyl hydrolase 13 family. GlgB subfamily. In terms of assembly, monomer.

The catalysed reaction is Transfers a segment of a (1-&gt;4)-alpha-D-glucan chain to a primary hydroxy group in a similar glucan chain.. The protein operates within glycan biosynthesis; glycogen biosynthesis. Functionally, catalyzes the formation of the alpha-1,6-glucosidic linkages in glycogen by scission of a 1,4-alpha-linked oligosaccharide from growing alpha-1,4-glucan chains and the subsequent attachment of the oligosaccharide to the alpha-1,6 position. This Rhizobium johnstonii (strain DSM 114642 / LMG 32736 / 3841) (Rhizobium leguminosarum bv. viciae) protein is 1,4-alpha-glucan branching enzyme GlgB 1.